A 144-amino-acid chain; its full sequence is Large ribosomal subunit protein uL15 (144 aa).

The disordered stretch occupies residues 1-58; it reads MRLNTLSPAAGSKPSKKRVGRGIGSGLGKTGGRGHKGQKSRSGGSVRPGFEGGQMPLK. A compositionally biased stretch (gly residues) spans 21 to 31; the sequence is RGIGSGLGKTG.

The protein belongs to the universal ribosomal protein uL15 family. Part of the 50S ribosomal subunit.

Functionally, binds to the 23S rRNA. The sequence is that of Large ribosomal subunit protein uL15 from Vibrio atlanticus (strain LGP32) (Vibrio splendidus (strain Mel32)).